A 418-amino-acid polypeptide reads, in one-letter code: MLSRDMNIADFDPELSQAIAQETQRQEDHIELIASENYCSPRVLEAQGSQLTNKYAEGYPHKRYYGGCEYVDIAEDLAIERANQLFGSDYANVQPHSGSQANSAVFMALLDAGDTVLGMSLAHGGHLTHGAHVSFSGKTYNAVQYGIDEQTGKIDYDVVEALAVEHKPKMIIGGFSAYSGIVDWQRFREIADKVGAYLLVDMAHVAGLVAAGLYPNPLPHAHVVTTTTHKTLAGPRGGLILSACGDEAIYKKLNSSVFPGNQGGPLCHVIAAKAVAFKEALQPDFKAYQQQVLLNAKAMVSVMQERGYDIVSGGTDNHLFLLDLISKDITGKDADAALGRANITVNKNSVPNDPRSPFVTSGLRIGSPAITRRGFKEEQAKQVATWICDVIDNIEDEAVIERVKGEVLTLCGKFPVYA.

(6S)-5,6,7,8-tetrahydrofolate is bound by residues leucine 121 and 125 to 127; that span reads GHL. Lysine 230 is subject to N6-(pyridoxal phosphate)lysine. A (6S)-5,6,7,8-tetrahydrofolate-binding site is contributed by 356 to 358; sequence SPF.

Belongs to the SHMT family. As to quaternary structure, homodimer. Pyridoxal 5'-phosphate serves as cofactor.

It is found in the cytoplasm. The catalysed reaction is (6R)-5,10-methylene-5,6,7,8-tetrahydrofolate + glycine + H2O = (6S)-5,6,7,8-tetrahydrofolate + L-serine. The protein operates within one-carbon metabolism; tetrahydrofolate interconversion. It participates in amino-acid biosynthesis; glycine biosynthesis; glycine from L-serine: step 1/1. In terms of biological role, catalyzes the reversible interconversion of serine and glycine with tetrahydrofolate (THF) serving as the one-carbon carrier. This reaction serves as the major source of one-carbon groups required for the biosynthesis of purines, thymidylate, methionine, and other important biomolecules. Also exhibits THF-independent aldolase activity toward beta-hydroxyamino acids, producing glycine and aldehydes, via a retro-aldol mechanism. The protein is Serine hydroxymethyltransferase of Pseudoalteromonas atlantica (strain T6c / ATCC BAA-1087).